A 517-amino-acid chain; its full sequence is Aldehyde dehydrogenase X, mitochondrial (517 aa).

The N-terminal 17 residues, 1–17, are a transit peptide targeting the mitochondrion; sequence MLRFLAPRLLSLQGRTA. Lysine 51 is modified (N6-acetyllysine). An N6-acetyllysine; alternate modification is found at lysine 52. At lysine 52 the chain carries N6-succinyllysine; alternate. Lysine 81 carries the N6-succinyllysine modification. Residue 262 to 267 coordinates NAD(+); the sequence is GSTEVG. Glutamate 285 serves as the catalytic Proton acceptor. The active-site Nucleophile is the cysteine 319. Lysine 364, lysine 383, lysine 399, lysine 414, and lysine 426 each carry N6-acetyllysine; alternate. N6-succinyllysine; alternate occurs at positions 364, 383, 399, 414, and 426. Position 429 is an N6-acetyllysine (lysine 429).

This sequence belongs to the aldehyde dehydrogenase family. In terms of assembly, homotetramer.

Its subcellular location is the mitochondrion matrix. The enzyme catalyses an aldehyde + NAD(+) + H2O = a carboxylate + NADH + 2 H(+). Its pathway is alcohol metabolism; ethanol degradation; acetate from ethanol: step 2/2. ALDHs play a major role in the detoxification of alcohol-derived acetaldehyde. They are involved in the metabolism of corticosteroids, biogenic amines, neurotransmitters, and lipid peroxidation. This chain is Aldehyde dehydrogenase X, mitochondrial (ALDH1B1), found in Pongo abelii (Sumatran orangutan).